The primary structure comprises 373 residues: GTP cyclohydrolase 1 type 2 homolog (373 aa).

The a divalent metal cation site is built by His-67, His-68, Asp-106, His-333, and Glu-336.

Belongs to the GTP cyclohydrolase I type 2/NIF3 family. As to quaternary structure, homohexamer.

This Listeria innocua serovar 6a (strain ATCC BAA-680 / CLIP 11262) protein is GTP cyclohydrolase 1 type 2 homolog.